A 428-amino-acid chain; its full sequence is Sporulation kinase C (428 aa).

2 helical membrane passes run 8–28 (IISI…FYFI) and 36–56 (PVDI…AYYI). The PAS domain occupies 76-147 (LSEEKNRIMD…NTQIQNKASS (72 aa)). The 53-residue stretch at 148–200 (GMFTAKYVTKNGTIFWGEVHYKLYYDRDDQFTGSLGTMSDITERKEAEDELIE) folds into the PAC domain. The region spanning 221 to 426 (GIAHEVRNPL…VFQVVLPLKS (206 aa)) is the Histidine kinase domain. H224 carries the post-translational modification Phosphohistidine; by autocatalysis.

In terms of assembly, oligomerizes, probably forms homodimers; oligomerization is assisted by FloT. Interacts with FloT. Another study shows only rare colocalization with FloT or FloA membrane assemblies. KinC membrane assemblies are more mobile than FloT membrane assemblies.

It is found in the cell membrane. Its subcellular location is the membrane raft. The enzyme catalyses ATP + protein L-histidine = ADP + protein N-phospho-L-histidine.. Phosphorylates the sporulation-regulatory protein Spo0A a transcription factor that also controls biofilm formation. Requires FloT and FloA for localization to DRMs and for activity. This chain is Sporulation kinase C, found in Bacillus subtilis (strain 168).